A 235-amino-acid polypeptide reads, in one-letter code: Probable tetraspanin tspB (235 aa).

At 1 to 23 the chain is on the cytoplasmic side; the sequence is MVDTTNLIPNTPRYLKVPLIAFN. The helical transmembrane segment at 24 to 44 threads the bilayer; that stretch reads TILWVLGLVLVIIGSIGVSFF. Residues 45–68 lie on the Extracellular side of the membrane; that stretch reads SNFKDFTKVSKASAALSNLTTGAP. Asn62 is a glycosylation site (N-linked (GlcNAc...) asparagine). The helical transmembrane segment at 69–89 threads the bilayer; the sequence is AGVLVIGIFFVILTVIGCFVA. The Cytoplasmic portion of the chain corresponds to 90–93; the sequence is GKEK. The helical transmembrane segment at 94–114 threads the bilayer; that stretch reads LVGLVIYTMLMLIILVALIGV. Residues 115 to 200 are Extracellular-facing; it reads GGKALTLHND…ISSNLYLVGA (86 aa). Residues Asn143 and Asn159 are each glycosylated (N-linked (GlcNAc...) asparagine). A helical transmembrane segment spans residues 201-221; it reads AAVSIGVIEFICMLFALFLII. Residues 222 to 235 lie on the Cytoplasmic side of the membrane; sequence RICRAPRTKSYDYQ.

This sequence belongs to the tetraspanin (TM4SF) family.

The protein resides in the membrane. The protein is Probable tetraspanin tspB (tspB) of Dictyostelium discoideum (Social amoeba).